Reading from the N-terminus, the 186-residue chain is Adrenodoxin, mitochondrial (186 aa).

Residues 1–58 (MAARLLRVASAALGDTAGRWRLLARPRAGAGGLRGSRGPGLGGGAVATRTLSVSGRAQ) constitute a mitochondrion transit peptide. A Phosphoserine modification is found at Ser-61. Lys-64 carries the post-translational modification N6-acetyllysine; alternate. Residue Lys-64 is modified to N6-succinyllysine; alternate. One can recognise a 2Fe-2S ferredoxin-type domain in the interval 65–169 (ITVHFINRDG…NMTVRVPDAV (105 aa)). [2Fe-2S] cluster is bound by residues Cys-104, Cys-110, Cys-113, and Cys-150. Lys-156 is subject to N6-succinyllysine. A Phosphoserine modification is found at Ser-175.

Belongs to the adrenodoxin/putidaredoxin family. Interacts with CYP11A1. [2Fe-2S] cluster serves as cofactor. Detected in adrenal cortex and corpus luteum (at protein level).

Its subcellular location is the mitochondrion matrix. Its function is as follows. Essential for the synthesis of various steroid hormones. Participates in the reduction of mitochondrial cytochrome P450 for steroidogenesis. Transfers electrons from adrenodoxin reductase to CYP11A1, a cytochrome P450 that catalyzes cholesterol side-chain cleavage to produce pregnenolone, the precursor of most steroid hormones. Does not form a ternary complex with adrenodoxin reductase and CYP11A1 but shuttles between the two enzymes to transfer electrons. The protein is Adrenodoxin, mitochondrial (FDX1) of Bos taurus (Bovine).